The following is a 367-amino-acid chain: Mitogen-activated protein kinase 12 (367 aa).

A Protein kinase domain is found at 27–311 (YRDLQPVGSG…AGEALAHPYF (285 aa)). ATP-binding positions include 33–41 (VGSGAYGAV) and Lys56. Residue Asp153 is the Proton acceptor of the active site. The residue at position 183 (Thr183) is a Phosphothreonine; by MAP2K3 and MAP2K6. A TXY motif is present at residues 183–185 (TGY). Tyr185 carries the post-translational modification Phosphotyrosine.

This sequence belongs to the protein kinase superfamily. CMGC Ser/Thr protein kinase family. MAP kinase subfamily. Monomer. Interacts with the PDZ domain of the syntrophin SNTA1. Interacts with SH3BP5. Interacts with LIN7C, SCRIB and SYNJ2BP. Interacts with PTPN4; this interaction induces the activation of PTPN4 phosphatase activity. Mg(2+) serves as cofactor. In terms of processing, dually phosphorylated on Thr-183 and Tyr-185 by MAP2K3/MKK3 and MAP2K6/MKK6, which activates the enzyme. Ubiquitinated. Ubiquitination leads to degradation by the proteasome pathway. In terms of tissue distribution, highly expressed in skeletal muscle and heart.

The protein resides in the cytoplasm. It is found in the nucleus. It localises to the mitochondrion. It catalyses the reaction L-seryl-[protein] + ATP = O-phospho-L-seryl-[protein] + ADP + H(+). The enzyme catalyses L-threonyl-[protein] + ATP = O-phospho-L-threonyl-[protein] + ADP + H(+). Activated by phosphorylation on threonine and tyrosine. MAP2K3/MKK3 and MAP2K6/MKK6 are both essential for the activation of MAPK12 induced by environmental stress, whereas MAP2K6/MKK6 is the major MAPK12 activator in response to TNF-alpha. Functionally, serine/threonine kinase which acts as an essential component of the MAP kinase signal transduction pathway. MAPK12 is one of the four p38 MAPKs which play an important role in the cascades of cellular responses evoked by extracellular stimuli such as pro-inflammatory cytokines or physical stress leading to direct activation of transcription factors such as ELK1 and ATF2. Accordingly, p38 MAPKs phosphorylate a broad range of proteins and it has been estimated that they may have approximately 200 to 300 substrates each. Some of the targets are downstream kinases such as MAPKAPK2, which are activated through phosphorylation and further phosphorylate additional targets. Plays a role in myoblast differentiation and also in the down-regulation of cyclin D1 in response to hypoxia in adrenal cells suggesting MAPK12 may inhibit cell proliferation while promoting differentiation. Phosphorylates DLG1. Following osmotic shock, MAPK12 in the cell nucleus increases its association with nuclear DLG1, thereby causing dissociation of DLG1-SFPQ complexes. This function is independent of its catalytic activity and could affect mRNA processing and/or gene transcription to aid cell adaptation to osmolarity changes in the environment. Regulates UV-induced checkpoint signaling and repair of UV-induced DNA damage and G2 arrest after gamma-radiation exposure. MAPK12 is involved in the regulation of SLC2A1 expression and basal glucose uptake in L6 myotubes; and negatively regulates SLC2A4 expression and contraction-mediated glucose uptake in adult skeletal muscle. C-Jun (JUN) phosphorylation is stimulated by MAPK14 and inhibited by MAPK12, leading to a distinct AP-1 regulation. MAPK12 is required for the normal kinetochore localization of PLK1, prevents chromosomal instability and supports mitotic cell viability. MAPK12-signaling is also positively regulating the expansion of transient amplifying myogenic precursor cells during muscle growth and regeneration. This Homo sapiens (Human) protein is Mitogen-activated protein kinase 12 (MAPK12).